The primary structure comprises 402 residues: Enoyl-[acyl-carrier-protein] reductase [NADH] (402 aa).

Residues 48–53 (GASSGY), 74–75 (FE), 111–112 (DA), and 140–141 (LA) each bind NAD(+). Tyrosine 226 is a binding site for substrate. Tyrosine 236 acts as the Proton donor in catalysis. Residues lysine 245 and 274 to 276 (VVT) contribute to the NAD(+) site.

Belongs to the TER reductase family. In terms of assembly, monomer.

It carries out the reaction a 2,3-saturated acyl-[ACP] + NAD(+) = a (2E)-enoyl-[ACP] + NADH + H(+). The protein operates within lipid metabolism; fatty acid biosynthesis. Functionally, involved in the final reduction of the elongation cycle of fatty acid synthesis (FAS II). Catalyzes the reduction of a carbon-carbon double bond in an enoyl moiety that is covalently linked to an acyl carrier protein (ACP). In Xanthomonas axonopodis pv. citri (strain 306), this protein is Enoyl-[acyl-carrier-protein] reductase [NADH].